Consider the following 187-residue polypeptide: NADH-quinone oxidoreductase subunit B (187 aa).

Positions 1–10 (MTADHNRALH) are enriched in basic and acidic residues. Residues 1-22 (MTADHNRALHDAPTARGGEVRQ) form a disordered region. [4Fe-4S] cluster-binding residues include Cys-66, Cys-67, Cys-131, and Cys-161.

The protein belongs to the complex I 20 kDa subunit family. In terms of assembly, NDH-1 is composed of 14 different subunits. Subunits NuoB, C, D, E, F, and G constitute the peripheral sector of the complex. It depends on [4Fe-4S] cluster as a cofactor.

It is found in the cell inner membrane. The enzyme catalyses a quinone + NADH + 5 H(+)(in) = a quinol + NAD(+) + 4 H(+)(out). Functionally, NDH-1 shuttles electrons from NADH, via FMN and iron-sulfur (Fe-S) centers, to quinones in the respiratory chain. Couples the redox reaction to proton translocation (for every two electrons transferred, four hydrogen ions are translocated across the cytoplasmic membrane), and thus conserves the redox energy in a proton gradient. The sequence is that of NADH-quinone oxidoreductase subunit B from Erythrobacter litoralis (strain HTCC2594).